The primary structure comprises 696 residues: Iron-sulfur clusters transporter ATM1, mitochondrial (696 aa).

A mitochondrion-targeting transit peptide spans 1 to 67 (MIKWGLFGAV…RFFSSSHKLG (67 aa)). The Mitochondrial matrix segment spans residues 68-109 (VNTKEDSSTYLFGRKISTSESKMLKSLLVTIWPKNKPSFKLR). Residues 110–131 (VIFALSLLIASKLLNVEVPFFF) form a helical membrane-spanning segment. One can recognise an ABC transmembrane type-1 domain in the interval 110 to 400 (VIFALSLLIA…LGSVYRELKQ (291 aa)). Topologically, residues 132–154 (KKIIDEMNVDWNDQLGTVGTVIG) are mitochondrial intermembrane. Residues 155–178 (TLIIAYGGARFGAVLFGELRNAVF) traverse the membrane as a helical segment. At 179–227 (ASVAQTAIKRVAHNTFVHLLNMDLNFHLSRQTGGLTRAIDRGTKGISYV) the chain is on the mitochondrial matrix side. The helical transmembrane segment at 228-251 (LNAMVFHIIPISFEISMVCGILIY) threads the bilayer. Asn-252 is a topological domain (mitochondrial intermembrane). Residues 253–273 (YGLSFAAVTLATMLSYSVFTI) form a helical membrane-spanning segment. The Mitochondrial matrix segment spans residues 274 to 339 (KTTAWRTGFR…ASVKVATSLA (66 aa)). Glutathione is bound by residues 279 to 283 (RTGFR) and 342 to 345 (NAGQ). Residues 340 to 358 (YLNAGQNFIFTSALTAMMY) form a helical membrane-spanning segment. Residues 359-373 (MGCNGVATGSLTVGD) are Mitochondrial intermembrane-facing. A helical transmembrane segment spans residues 374-395 (LVLINQLVFQLSVPLSFLGSVY). Residue Gly-392 coordinates glutathione. At 396 to 696 (RELKQSLLDM…EYAKETEEQK (301 aa)) the chain is on the mitochondrial matrix side. Residues 438–674 (IKFENVTFGY…PNSLYSQLWN (237 aa)) enclose the ABC transporter domain. Residues Tyr-447 and 471-482 (GPSGSGKSTILR) each bind ATP.

Belongs to the ABC transporter superfamily. ABCB family. Heavy Metal importer (TC 3.A.1.210) subfamily. In terms of assembly, homodimer.

The protein resides in the mitochondrion inner membrane. Performs an essential function in the generation of cytoplasmic iron-sulfur proteins by mediating the ATP-dependent export of Fe/S cluster precursors synthesized by NFS1 and other mitochondrial proteins. Hydrolyzes ATP. Binds glutathione and may function by transporting a glutathione-conjugated iron-sulfur compound. This chain is Iron-sulfur clusters transporter ATM1, mitochondrial, found in Debaryomyces hansenii (strain ATCC 36239 / CBS 767 / BCRC 21394 / JCM 1990 / NBRC 0083 / IGC 2968) (Yeast).